A 100-amino-acid polypeptide reads, in one-letter code: Integration host factor subunit alpha (100 aa).

The protein belongs to the bacterial histone-like protein family. Heterodimer of an alpha and a beta chain.

In terms of biological role, this protein is one of the two subunits of integration host factor, a specific DNA-binding protein that functions in genetic recombination as well as in transcriptional and translational control. This Phenylobacterium zucineum (strain HLK1) protein is Integration host factor subunit alpha.